Consider the following 480-residue polypeptide: NADH-quinone oxidoreductase subunit N (480 aa).

Helical transmembrane passes span 10-30, 40-60, 80-100, 117-137, 166-186, 208-228, 246-266, 276-296, 304-324, 330-350, 374-394, 409-431, and 452-472; these read FISI…ILIE, WSSL…WGGI, FFTV…TAFF, AVFG…FLGI, LMGS…YGAI, VLFF…AALV, TAFM…RLFF, WNQV…FVAL, FFAY…VIGN, ALTF…AVLA, LASL…TAGF, YYGL…LRII, and IVGT…APFL.

Belongs to the complex I subunit 2 family. In terms of assembly, NDH-1 is composed of 14 different subunits. Subunits NuoA, H, J, K, L, M, N constitute the membrane sector of the complex.

Its subcellular location is the cell inner membrane. It carries out the reaction a quinone + NADH + 5 H(+)(in) = a quinol + NAD(+) + 4 H(+)(out). NDH-1 shuttles electrons from NADH, via FMN and iron-sulfur (Fe-S) centers, to quinones in the respiratory chain. The immediate electron acceptor for the enzyme in this species is believed to be ubiquinone. Couples the redox reaction to proton translocation (for every two electrons transferred, four hydrogen ions are translocated across the cytoplasmic membrane), and thus conserves the redox energy in a proton gradient. The chain is NADH-quinone oxidoreductase subunit N from Protochlamydia amoebophila (strain UWE25).